Reading from the N-terminus, the 505-residue chain is Cytochrome P450 CYP71D313 (505 aa).

The chain crosses the membrane as a helical span at residues 1-21; the sequence is MELQFPLFSIFFVTILFFFLF. Cysteine 441 serves as a coordination point for heme. A helical transmembrane segment spans residues 442 to 462; the sequence is PGIAFGIATIELPLALLLYHF.

Belongs to the cytochrome P450 family. Heme is required as a cofactor.

It localises to the membrane. Its function is as follows. Probable heme-thiolate monooxygenase. In Panax ginseng (Korean ginseng), this protein is Cytochrome P450 CYP71D313.